Here is a 250-residue protein sequence, read N- to C-terminus: Eukaryotic translation initiation factor 3 subunit K (250 aa).

One can recognise a PCI domain in the interval 46-229 (FDCYANLALL…KENEARSEVK (184 aa)).

It belongs to the eIF-3 subunit K family. As to quaternary structure, component of the eukaryotic translation initiation factor 3 (eIF-3) complex.

It is found in the cytoplasm. Its function is as follows. Component of the eukaryotic translation initiation factor 3 (eIF-3) complex, which is involved in protein synthesis of a specialized repertoire of mRNAs and, together with other initiation factors, stimulates binding of mRNA and methionyl-tRNAi to the 40S ribosome. The eIF-3 complex specifically targets and initiates translation of a subset of mRNAs involved in cell proliferation. In Emericella nidulans (strain FGSC A4 / ATCC 38163 / CBS 112.46 / NRRL 194 / M139) (Aspergillus nidulans), this protein is Eukaryotic translation initiation factor 3 subunit K.